The primary structure comprises 565 residues: MQEDVYRSGIRKNLNRILQELTDDGKLDFESVPYQNLKAEIEKRDEECTEVLCKVLLETASRSGCADRQFVLQLFNEYFCNSSLFRDQILNDPKEFIEIMLETDPIRNPLPGSKSEGNELKSKSLAFIKNWEKMYAKNDARMKCLAVTLRKTKFVDYENGEKKIEEERKRREFLDERRRMIVERTLSLYKSKFEEIKEDVERLKMELETTMEMLVPSFTNSDDVDIPMDIPSTSSKSFELVIEDLSPLIKVNADNDAIVEAFLGAKTVLIHRVQTMRKLAKGLLPLKGAGESLAQSIIDYRDVIKKLVLKADEIRIKTKKKPVQKAKKFDDDFIDVEISIDDILMVQYANEASEDVKEDVKEPEKKLANPKKEEPKVKFVSFGLDLKYWGEERKDVEVPKNNADCHRFWRSADESTVAGTVHDTVYTQRQFTFVGEAPKIDRECLAKLPSGALCKRKDMFKCPLHGPLVDRDANGKPVKDEDRLKEIDRKERKRLKEAEEFSRKIVKEYESKTKRKRKHEEETSVRSRLQKKLFDPKTIQRVSADITSQQRSRLEKNFSHQFSHL.

The tract at residues 11-156 (RKNLNRILQE…VTLRKTKFVD (146 aa)) is VHS-like. A coiled-coil region spans residues 155–215 (VDYENGEKKI…ELETTMEMLV (61 aa)). A UVSSA-type zinc finger spans residues 441 to 468 (DRECLAKLPSGALCKRKDMFKCPLHGPL). The Zn(2+) site is built by C444, C454, C462, and H465. Residues 480–510 (DEDRLKEIDRKERKRLKEAEEFSRKIVKEYE) adopt a coiled-coil conformation. 2 disordered regions span residues 510-530 (ESKT…SRLQ) and 542-565 (VSAD…FSHL).

Belongs to the UVSSA family.

It is found in the chromosome. Its function is as follows. Factor involved in transcription-coupled nucleotide excision repair (TC-NER) in response to UV damage. TC-NER allows RNA polymerase II-blocking lesions to be rapidly removed from the transcribed strand of active genes. The polypeptide is UV-stimulated scaffold protein A homolog (Caenorhabditis briggsae).